A 324-amino-acid chain; its full sequence is 2,3,4,5-tetrahydropyridine-2,6-dicarboxylate N-succinyltransferase (324 aa).

Residues Asp173 and Glu190 each coordinate Mg(2+). Glu206 (acyl-anhydride intermediate) is an active-site residue. Succinyl-CoA is bound by residues Arg208, Gly223, Ser226, Ala249, 264–265 (EA), Gly272, Lys284, and 297–300 (RRNS).

Belongs to the type 2 tetrahydrodipicolinate N-succinyltransferase family. As to quaternary structure, homotrimer.

It is found in the cytoplasm. The catalysed reaction is (S)-2,3,4,5-tetrahydrodipicolinate + succinyl-CoA + H2O = (S)-2-succinylamino-6-oxoheptanedioate + CoA. Its pathway is amino-acid biosynthesis; L-lysine biosynthesis via DAP pathway; LL-2,6-diaminopimelate from (S)-tetrahydrodipicolinate (succinylase route): step 1/3. In terms of biological role, catalyzes the conversion of the cyclic tetrahydrodipicolinate (THDP) into the acyclic N-succinyl-L-2-amino-6-oxopimelate using succinyl-CoA. The protein is 2,3,4,5-tetrahydropyridine-2,6-dicarboxylate N-succinyltransferase of Geodermatophilus obscurus (strain ATCC 25078 / DSM 43160 / JCM 3152 / CCUG 61914 / KCC A-0152 / KCTC 9177 / NBRC 13315 / NRRL B-3577 / G-20).